The primary structure comprises 142 residues: Large ribosomal subunit protein uL13 (142 aa).

The protein belongs to the universal ribosomal protein uL13 family. Part of the 50S ribosomal subunit.

In terms of biological role, this protein is one of the early assembly proteins of the 50S ribosomal subunit, although it is not seen to bind rRNA by itself. It is important during the early stages of 50S assembly. The sequence is that of Large ribosomal subunit protein uL13 from Pseudomonas putida (strain ATCC 700007 / DSM 6899 / JCM 31910 / BCRC 17059 / LMG 24140 / F1).